The chain runs to 496 residues: Probable malate:quinone oxidoreductase (496 aa).

The protein belongs to the MQO family. FAD is required as a cofactor.

The enzyme catalyses (S)-malate + a quinone = a quinol + oxaloacetate. The protein operates within carbohydrate metabolism; tricarboxylic acid cycle; oxaloacetate from (S)-malate (quinone route): step 1/1. This Prochlorococcus marinus (strain NATL1A) protein is Probable malate:quinone oxidoreductase.